The sequence spans 616 residues: Kelch-like protein 36 (616 aa).

Positions 46–113 (CDVVLVADEQ…LYGGELVLDG (68 aa)) constitute a BTB domain. The BACK domain maps to 148-250 (YLYLQELASI…PKNDLLHRVK (103 aa)). Kelch repeat units lie at residues 296–345 (CLLF…VLGG), 346–397 (FIFI…SIED), 398–444 (MLVA…IYKD), 446–493 (VYIS…SLGD), 494–546 (SIYS…VWEG), and 547–595 (RIYI…VCAL).

Interacts with CUL3.

The protein operates within protein modification; protein ubiquitination. Probable substrate-specific adapter of an E3 ubiquitin-protein ligase complex which mediates the ubiquitination and subsequent proteasomal degradation of target proteins. This chain is Kelch-like protein 36 (KLHL36), found in Bos taurus (Bovine).